We begin with the raw amino-acid sequence, 242 residues long: Small ribosomal subunit protein uS2 (242 aa).

The protein belongs to the universal ribosomal protein uS2 family.

The polypeptide is Small ribosomal subunit protein uS2 (Shewanella denitrificans (strain OS217 / ATCC BAA-1090 / DSM 15013)).